Consider the following 445-residue polypeptide: Phosphoglucosamine mutase (445 aa).

Serine 102 (phosphoserine intermediate) is an active-site residue. Positions 102, 241, 243, and 245 each coordinate Mg(2+). Serine 102 carries the phosphoserine modification.

The protein belongs to the phosphohexose mutase family. Mg(2+) is required as a cofactor. Post-translationally, activated by phosphorylation.

It carries out the reaction alpha-D-glucosamine 1-phosphate = D-glucosamine 6-phosphate. Its function is as follows. Catalyzes the conversion of glucosamine-6-phosphate to glucosamine-1-phosphate. In Escherichia coli O127:H6 (strain E2348/69 / EPEC), this protein is Phosphoglucosamine mutase.